Reading from the N-terminus, the 309-residue chain is Elongation factor Ts (309 aa).

The segment at 82–85 is involved in Mg(2+) ion dislocation from EF-Tu; that stretch reads TDFV.

It belongs to the EF-Ts family.

The protein localises to the cytoplasm. Functionally, associates with the EF-Tu.GDP complex and induces the exchange of GDP to GTP. It remains bound to the aminoacyl-tRNA.EF-Tu.GTP complex up to the GTP hydrolysis stage on the ribosome. In Rickettsia prowazekii (strain Madrid E), this protein is Elongation factor Ts (tsf).